We begin with the raw amino-acid sequence, 181 residues long: Major urinary protein (181 aa).

Residues 1–19 (MKLLLLLLCLGLTLVCGHA) form the signal peptide. The N-linked (GlcNAc...) asparagine glycan is linked to Asn54. Residues Cys83 and Cys176 are joined by a disulfide bond.

This sequence belongs to the calycin superfamily. Lipocalin family. In terms of tissue distribution, abundant in the urine of adult male rats but absent from that of females.

It localises to the cytoplasm. Its subcellular location is the cytosol. It is found in the secreted. Its function is as follows. Major urinary proteins (Mups) bind and release pheromones. They may also protect pheromones from oxidation. In this context, they play a role in the regulation of social behaviors, such as aggression, mating, pup-suckling, territory establishment and dominance. Acts as a kairomone, detected by the prey vomeronasal organ and inducing fear reactions in mice. This Rattus norvegicus (Rat) protein is Major urinary protein.